The chain runs to 367 residues: Phosphoribosylaminoimidazole-succinocarboxamide synthase (367 aa).

The protein belongs to the SAICAR synthetase family.

The catalysed reaction is 5-amino-1-(5-phospho-D-ribosyl)imidazole-4-carboxylate + L-aspartate + ATP = (2S)-2-[5-amino-1-(5-phospho-beta-D-ribosyl)imidazole-4-carboxamido]succinate + ADP + phosphate + 2 H(+). It participates in purine metabolism; IMP biosynthesis via de novo pathway; 5-amino-1-(5-phospho-D-ribosyl)imidazole-4-carboxamide from 5-amino-1-(5-phospho-D-ribosyl)imidazole-4-carboxylate: step 1/2. The protein is Phosphoribosylaminoimidazole-succinocarboxamide synthase of Aliivibrio salmonicida (strain LFI1238) (Vibrio salmonicida (strain LFI1238)).